The following is a 362-amino-acid chain: Nicotinate-nucleotide--dimethylbenzimidazole phosphoribosyltransferase (362 aa).

Glutamate 321 functions as the Proton acceptor in the catalytic mechanism.

It belongs to the CobT family.

The catalysed reaction is 5,6-dimethylbenzimidazole + nicotinate beta-D-ribonucleotide = alpha-ribazole 5'-phosphate + nicotinate + H(+). The protein operates within nucleoside biosynthesis; alpha-ribazole biosynthesis; alpha-ribazole from 5,6-dimethylbenzimidazole: step 1/2. Its function is as follows. Catalyzes the synthesis of alpha-ribazole-5'-phosphate from nicotinate mononucleotide (NAMN) and 5,6-dimethylbenzimidazole (DMB). This Clostridium tetani (strain Massachusetts / E88) protein is Nicotinate-nucleotide--dimethylbenzimidazole phosphoribosyltransferase.